We begin with the raw amino-acid sequence, 621 residues long: KIF-binding protein (621 aa).

Position 178 is a phosphoserine (S178).

The protein belongs to the KIF-binding protein family. In terms of assembly, interacts with KIF1B; positively regulates KIF1B microtubule motor activity. Interacts with STMN2.

The protein resides in the cytoplasm. It is found in the cytoskeleton. In terms of biological role, activator of KIF1B plus-end-directed microtubule motor activity. Required for organization of axonal microtubules, and axonal outgrowth and maintenance during peripheral and central nervous system development. This is KIF-binding protein (KIFBP) from Bos taurus (Bovine).